The primary structure comprises 473 residues: Photosystem II CP43 reaction center protein (473 aa).

A propeptide spanning residues 1–14 is cleaved from the precursor; that stretch reads MKTLYSLRRFYPVE. N-acetylthreonine is present on T15. At T15 the chain carries Phosphothreonine. A run of 5 helical transmembrane segments spans residues 69–93, 134–155, 178–200, 255–275, and 291–312; these read LFEV…PHLA, LIGP…KDRN, KALY…RKIT, KPFA…LSYS, and WFNN…ASQA. E367 is a binding site for [CaMn4O5] cluster. Residues 447-471 form a helical membrane-spanning segment; sequence RARAAAAGFEKGIDRDFEPVLSMTP.

It belongs to the PsbB/PsbC family. PsbC subfamily. In terms of assembly, PSII is composed of 1 copy each of membrane proteins PsbA, PsbB, PsbC, PsbD, PsbE, PsbF, PsbH, PsbI, PsbJ, PsbK, PsbL, PsbM, PsbT, PsbX, PsbY, PsbZ, Psb30/Ycf12, at least 3 peripheral proteins of the oxygen-evolving complex and a large number of cofactors. It forms dimeric complexes. It depends on Binds multiple chlorophylls and provides some of the ligands for the Ca-4Mn-5O cluster of the oxygen-evolving complex. It may also provide a ligand for a Cl- that is required for oxygen evolution. PSII binds additional chlorophylls, carotenoids and specific lipids. as a cofactor.

The protein localises to the plastid. The protein resides in the chloroplast thylakoid membrane. Functionally, one of the components of the core complex of photosystem II (PSII). It binds chlorophyll and helps catalyze the primary light-induced photochemical processes of PSII. PSII is a light-driven water:plastoquinone oxidoreductase, using light energy to abstract electrons from H(2)O, generating O(2) and a proton gradient subsequently used for ATP formation. The protein is Photosystem II CP43 reaction center protein of Cryptomeria japonica (Japanese cedar).